The chain runs to 181 residues: Cytochrome b6-f complex iron-sulfur subunit (181 aa).

The segment at 1–35 (MAQTGNFKSPARMSSLGQGAAPASAGAVTGGKPRE) is disordered. 2 consecutive transmembrane segments (helical) span residues 53-73 (VGGVGAVVAVSTLYPVVRYIV) and 114-134 (GGSLTAVSAICTHLGCLVHWD). The region spanning 85 to 178 (LAVGPASDVP…VKIEDGKIVV (94 aa)) is the Rieske domain. [2Fe-2S] cluster contacts are provided by Cys124, His126, Cys142, and His145. Residues Cys129 and Cys144 are joined by a disulfide bond.

The protein belongs to the Rieske iron-sulfur protein family. [2Fe-2S] cluster is required as a cofactor.

It is found in the cell inner membrane. The catalysed reaction is 2 oxidized [plastocyanin] + a plastoquinol + 2 H(+)(in) = 2 reduced [plastocyanin] + a plastoquinone + 4 H(+)(out). Functionally, component of the green S-bacteria bc-complex which consists of the Rieske protein and cytochrome b subunit and which appears to lack a cytochrome c1-equivalent. This complex has a comparatively low redox potential. This Chlorobaculum tepidum (strain ATCC 49652 / DSM 12025 / NBRC 103806 / TLS) (Chlorobium tepidum) protein is Cytochrome b6-f complex iron-sulfur subunit (petC).